Consider the following 276-residue polypeptide: Elongation factor Ts (276 aa).

The tract at residues 76 to 79 (TDFV) is involved in Mg(2+) ion dislocation from EF-Tu.

Belongs to the EF-Ts family.

The protein localises to the cytoplasm. In terms of biological role, associates with the EF-Tu.GDP complex and induces the exchange of GDP to GTP. It remains bound to the aminoacyl-tRNA.EF-Tu.GTP complex up to the GTP hydrolysis stage on the ribosome. The protein is Elongation factor Ts of Mycobacterium leprae (strain Br4923).